The following is a 239-amino-acid chain: Outer membrane protein PagN (239 aa).

An N-terminal signal peptide occupies residues 1 to 22; sequence MKNFFAVCIIPLVVAWSATASA. Residues 23–26 are Periplasmic-facing; the sequence is KEGI. Residues 27–36 traverse the membrane as a beta stranded segment; the sequence is YITGKAGTSV. Topologically, residues 37 to 65 are extracellular; that stretch reads VNVYGINSTFSQDEIVNGHATLPDRTKGV. Residues 66–76 form a beta stranded membrane-spanning segment; sequence FGGGVAIGYDF. The Periplasmic portion of the chain corresponds to 77–81; that stretch reads YDPFQ. A beta stranded membrane pass occupies residues 82-92; that stretch reads LPVRLELDTTF. Topologically, residues 93–120 are extracellular; the sequence is RGETDAKGGQDIIAFGDPVHINVKNQVR. A beta stranded transmembrane segment spans residues 121-132; it reads MTTYMVNGYYDF. Residues 133–137 lie on the Periplasmic side of the membrane; that stretch reads HNSTA. The chain crosses the membrane as a beta stranded span at residues 138-148; sequence FTPYISAGVGL. Topologically, residues 149–174 are extracellular; it reads AHVKLSNNTIPVGFGINETLSASKNN. Residues 175–185 traverse the membrane as a beta stranded segment; that stretch reads FAWGAGIGAKY. Residues 186–190 are Periplasmic-facing; sequence AVTDN. The beta stranded transmembrane segment at 191–200 threads the bilayer; that stretch reads IMIDASYKYI. The Extracellular segment spans residues 201–230; that stretch reads NAGKVSISKNHYAGDEHTAYDADTKAASND. The beta stranded transmembrane segment at 231-239 threads the bilayer; the sequence is FMLGITYAF.

It is found in the cell outer membrane. Haemagglutinin that facilitates the adhesion to and invasion of epithelial mammalian cells. Utilizes heparinated proteoglycan as a receptor to successfully invade host cells. The polypeptide is Outer membrane protein PagN (pagN) (Salmonella typhimurium (strain LT2 / SGSC1412 / ATCC 700720)).